Reading from the N-terminus, the 159-residue chain is Ribosomal RNA large subunit methyltransferase H (159 aa).

S-adenosyl-L-methionine-binding positions include leucine 76, glycine 107, and 126 to 131; that span reads LSSLTL.

Belongs to the RNA methyltransferase RlmH family. In terms of assembly, homodimer.

The protein resides in the cytoplasm. It carries out the reaction pseudouridine(1915) in 23S rRNA + S-adenosyl-L-methionine = N(3)-methylpseudouridine(1915) in 23S rRNA + S-adenosyl-L-homocysteine + H(+). Specifically methylates the pseudouridine at position 1915 (m3Psi1915) in 23S rRNA. This is Ribosomal RNA large subunit methyltransferase H from Cupriavidus necator (strain ATCC 17699 / DSM 428 / KCTC 22496 / NCIMB 10442 / H16 / Stanier 337) (Ralstonia eutropha).